We begin with the raw amino-acid sequence, 300 residues long: Ribosomal RNA small subunit methyltransferase H (300 aa).

Residues 46–48 (GGH), D65, F92, D107, and Q114 each bind S-adenosyl-L-methionine.

It belongs to the methyltransferase superfamily. RsmH family.

It localises to the cytoplasm. It catalyses the reaction cytidine(1402) in 16S rRNA + S-adenosyl-L-methionine = N(4)-methylcytidine(1402) in 16S rRNA + S-adenosyl-L-homocysteine + H(+). Functionally, specifically methylates the N4 position of cytidine in position 1402 (C1402) of 16S rRNA. The sequence is that of Ribosomal RNA small subunit methyltransferase H from Prochlorococcus marinus (strain MIT 9215).